A 389-amino-acid chain; its full sequence is Multidrug resistance protein 1 (389 aa).

11 helical membrane-spanning segments follow: residues 6–26 (ITLT…GLVI), 42–62 (AVGY…PIAG), 71–91 (KIMI…FGIG), 102–122 (MLGG…IADI), 134–154 (YMSA…GFLA), 160–180 (LPFF…ILTL), 202–222 (IFAP…FGLA), 243–263 (IAIM…VLFD), 286–306 (VFLL…VTVF), 336–356 (SMFT…LFDI), and 358–378 (VNYP…LTIA).

It belongs to the major facilitator superfamily. TCR/Tet family.

Its subcellular location is the cell membrane. In terms of biological role, energy-dependent efflux pump responsible for decreased drug accumulation in multi-drug-resistant cells. Probably uses a transmembrane proton gradient as the energy source. Causes the efflux of a variety of toxic substances, including such structurally diverse compounds as ethidium bromide, rhodamine and acridine dyes, tetraphenylphosphonium, puromycin, chloramphenicol, doxorubicin, and fluoroquinolone antibiotics. This Bacillus subtilis (strain 168) protein is Multidrug resistance protein 1 (bmr).